Consider the following 238-residue polypeptide: Ribonuclease PH (238 aa).

Phosphate-binding positions include arginine 87 and 125 to 127 (GTR).

The protein belongs to the RNase PH family. In terms of assembly, homohexameric ring arranged as a trimer of dimers.

It catalyses the reaction tRNA(n+1) + phosphate = tRNA(n) + a ribonucleoside 5'-diphosphate. Phosphorolytic 3'-5' exoribonuclease that plays an important role in tRNA 3'-end maturation. Removes nucleotide residues following the 3'-CCA terminus of tRNAs; can also add nucleotides to the ends of RNA molecules by using nucleoside diphosphates as substrates, but this may not be physiologically important. Probably plays a role in initiation of 16S rRNA degradation (leading to ribosome degradation) during starvation. The polypeptide is Ribonuclease PH (Synechococcus elongatus (strain ATCC 33912 / PCC 7942 / FACHB-805) (Anacystis nidulans R2)).